The sequence spans 285 residues: Putative ABC transporter ATP-binding protein CPE0195 (285 aa).

An ABC transporter domain is found at 6 to 242 (LKVEELNYNY…KEVIRKVNLR (237 aa)). 39 to 46 (GGNGVGKS) lines the ATP pocket.

This sequence belongs to the ABC transporter superfamily.

It localises to the cell membrane. Its function is as follows. Probably part of an ABC transporter complex. Responsible for energy coupling to the transport system. This Clostridium perfringens (strain 13 / Type A) protein is Putative ABC transporter ATP-binding protein CPE0195.